Here is an 84-residue protein sequence, read N- to C-terminus: Sulfur carrier protein TusA (84 aa).

The Cysteine persulfide intermediate role is filled by cysteine 21.

It belongs to the sulfur carrier protein TusA family.

The protein localises to the cytoplasm. Functionally, sulfur carrier protein which probably makes part of a sulfur-relay system. The polypeptide is Sulfur carrier protein TusA (Pseudomonas savastanoi pv. phaseolicola (strain 1448A / Race 6) (Pseudomonas syringae pv. phaseolicola (strain 1448A / Race 6))).